A 252-amino-acid chain; its full sequence is 14-3-3 protein 10 (252 aa).

The protein belongs to the 14-3-3 family. As to quaternary structure, homodimer.

In Solanum lycopersicum (Tomato), this protein is 14-3-3 protein 10 (TFT10).